The chain runs to 378 residues: Glutamate 5-kinase (378 aa).

Lysine 14 is a binding site for ATP. Substrate contacts are provided by serine 54, aspartate 141, and asparagine 153. ATP is bound at residue 173-174; the sequence is SD. One can recognise a PUA domain in the interval 279 to 356; that stretch reads AGRLTVDAGA…DEISAILGYD (78 aa).

Belongs to the glutamate 5-kinase family.

It is found in the cytoplasm. The catalysed reaction is L-glutamate + ATP = L-glutamyl 5-phosphate + ADP. It participates in amino-acid biosynthesis; L-proline biosynthesis; L-glutamate 5-semialdehyde from L-glutamate: step 1/2. Its function is as follows. Catalyzes the transfer of a phosphate group to glutamate to form L-glutamate 5-phosphate. The sequence is that of Glutamate 5-kinase from Brucella canis (strain ATCC 23365 / NCTC 10854 / RM-666).